Consider the following 120-residue polypeptide: C-C motif chemokine 23 (120 aa).

Positions 1 to 21 (MKVSVAALSCLMLVTALGSQA) are cleaved as a signal peptide. Intrachain disulfides connect Cys-54–Cys-78, Cys-55–Cys-94, and Cys-65–Cys-105.

Belongs to the intercrine beta (chemokine CC) family.

It localises to the secreted. In terms of biological role, shows chemotactic activity for monocytes, resting T-lymphocytes, and neutrophils, but not for activated lymphocytes. Inhibits proliferation of myeloid progenitor cells in colony formation assays. This protein can bind heparin. Binds CCR1. The protein is C-C motif chemokine 23 (CCL23) of Macaca mulatta (Rhesus macaque).